Consider the following 221-residue polypeptide: Stromal cell-derived factor 2-like protein 1 (221 aa).

The signal sequence occupies residues 1 to 28 (MWGASRGRVAGPTLLGLLLALSVRSGGA). MIR domains follow at residues 33 to 87 (AGLV…IRGG), 95 to 150 (GLPV…VRCS), and 151 to 205 (GQHW…AMEG). Phosphoserine is present on Ser-215. Residues 218-221 (HDEL) carry the Prevents secretion from ER motif.

As to expression, ubiquitously expressed with high expression in the testis, ovary, uterus, and low expression in heart and skeletal muscle.

It localises to the endoplasmic reticulum lumen. This is Stromal cell-derived factor 2-like protein 1 (Sdf2l1) from Mus musculus (Mouse).